We begin with the raw amino-acid sequence, 351 residues long: tRNA pseudouridine synthase D (351 aa).

Asp81 acts as the Nucleophile in catalysis. Positions 158 to 304 (GVPNYFGSQR…MRHERRAIEL (147 aa)) constitute a TRUD domain.

This sequence belongs to the pseudouridine synthase TruD family.

The enzyme catalyses uridine(13) in tRNA = pseudouridine(13) in tRNA. Functionally, responsible for synthesis of pseudouridine from uracil-13 in transfer RNAs. This is tRNA pseudouridine synthase D from Aliivibrio fischeri (strain ATCC 700601 / ES114) (Vibrio fischeri).